The chain runs to 494 residues: Nuclear distribution protein PAC1 (494 aa).

The LisH domain maps to 14–46; it reads QKNELDKSVLRYLNWNYKQTVRHEHAQDYESVR. Residues 90–123 adopt a coiled-coil conformation; that stretch reads NSIVRLQKKIIELEQNTETLVSQIKDLNTQVSEL. WD repeat units follow at residues 153–192, 196–244, 251–292, 295–334, 347–395, 415–454, and 457–492; these read NVES…IPLA, SHTK…CKFQ, GHEH…SLKT, PHSQ…SVGT, HFIE…LMAH, GHLS…HVWE, and HTGF…SNVF.

This sequence belongs to the WD repeat LIS1/nudF family. As to quaternary structure, self-associates. Interacts with NDL1 and dynein.

It localises to the cytoplasm. It is found in the cytoskeleton. The protein localises to the spindle pole. Positively regulates the activity of the minus-end directed microtubule motor protein dynein. Plays a central role in positioning the mitotic spindle at the bud neck during cell division. Targets cytoplasmic dynein to microtubule plus ends, thereby promoting dynein-mediated microtubule sliding along the bud cortex and consequently the movement of the mitotic spindle to the bud neck. The protein is Nuclear distribution protein PAC1 of Saccharomyces cerevisiae (strain YJM789) (Baker's yeast).